Consider the following 616-residue polypeptide: Dihydroxy-acid dehydratase (616 aa).

Asp81 lines the Mg(2+) pocket. Residue Cys122 coordinates [2Fe-2S] cluster. Mg(2+)-binding residues include Asp123 and Lys124. An N6-carboxylysine modification is found at Lys124. Residue Cys195 participates in [2Fe-2S] cluster binding. Glu491 is a Mg(2+) binding site. Residue Ser517 is the Proton acceptor of the active site.

This sequence belongs to the IlvD/Edd family. In terms of assembly, homodimer. Requires [2Fe-2S] cluster as cofactor. It depends on Mg(2+) as a cofactor.

The catalysed reaction is (2R)-2,3-dihydroxy-3-methylbutanoate = 3-methyl-2-oxobutanoate + H2O. It catalyses the reaction (2R,3R)-2,3-dihydroxy-3-methylpentanoate = (S)-3-methyl-2-oxopentanoate + H2O. It participates in amino-acid biosynthesis; L-isoleucine biosynthesis; L-isoleucine from 2-oxobutanoate: step 3/4. The protein operates within amino-acid biosynthesis; L-valine biosynthesis; L-valine from pyruvate: step 3/4. Functions in the biosynthesis of branched-chain amino acids. Catalyzes the dehydration of (2R,3R)-2,3-dihydroxy-3-methylpentanoate (2,3-dihydroxy-3-methylvalerate) into 2-oxo-3-methylpentanoate (2-oxo-3-methylvalerate) and of (2R)-2,3-dihydroxy-3-methylbutanoate (2,3-dihydroxyisovalerate) into 2-oxo-3-methylbutanoate (2-oxoisovalerate), the penultimate precursor to L-isoleucine and L-valine, respectively. The polypeptide is Dihydroxy-acid dehydratase (Yersinia pseudotuberculosis serotype I (strain IP32953)).